The following is a 795-amino-acid chain: Protocadherin beta-4 (795 aa).

The first 27 residues, 1-27 (MKKLGRIHPNRQVLAFILMVFLSQVRL), serve as a signal peptide directing secretion. Residues 28-689 (EPIRYSVLEE…AQADSLTVYL (662 aa)) are Extracellular-facing. 5 Cadherin domains span residues 34-132 (VLEE…SPIF), 137-241 (VLLK…APEF), 246-346 (YGVQ…PPEL), 351-450 (LTSS…APAF), and 455-560 (YTLF…SPFV). Asn-183 is a glycosylation site (N-linked (GlcNAc...) asparagine). 2 N-linked (GlcNAc...) asparagine glycosylation sites follow: Asn-417 and Asn-435. Asn-566 carries an N-linked (GlcNAc...) asparagine glycan. The Cadherin 6 domain maps to 567–670 (GSAPCTELVP…LVDGFSQPYL (104 aa)). The chain crosses the membrane as a helical span at residues 690 to 710 (VVALASVSSLFLFSVLLFVAV). The Cytoplasmic segment spans residues 711–795 (RLCRRSRAAS…PKFRNSLVFS (85 aa)).

It is found in the cell membrane. Potential calcium-dependent cell-adhesion protein. May be involved in the establishment and maintenance of specific neuronal connections in the brain. This is Protocadherin beta-4 (PCDHB4) from Homo sapiens (Human).